Consider the following 131-residue polypeptide: DNA-directed RNA polymerases I, II, and III subunit RPABC2 (131 aa).

Positions 1 to 24 (MDDADYDNDDVGGDDFDDVDEDVD) are disordered.

This sequence belongs to the archaeal Rpo6/eukaryotic RPB6 RNA polymerase subunit family. As to quaternary structure, component of the RNA polymerase I (Pol I), RNA polymerase II (Pol II) and RNA polymerase III (Pol III) complexes consisting of at least 13, 12 and 17 subunits, respectively.

It is found in the nucleus. Its function is as follows. DNA-dependent RNA polymerases catalyze the transcription of DNA into RNA using the four ribonucleoside triphosphates as substrates. Common component of RNA polymerases I, II and III which synthesize ribosomal RNA precursors, mRNA precursors and many functional non-coding RNAs, and small RNAs, such as 5S rRNA and tRNAs, respectively. Pol II is the central component of the basal RNA polymerase II transcription machinery. Pols are composed of mobile elements that move relative to each other. In Pol II, Polr2F/RPB6 is part of the clamp element and together with parts of Polr2A/RPB1 and RPB2 forms a pocket to which the Polr2D/RPB4-Polr2G/RPB7 subcomplex binds. In Drosophila melanogaster (Fruit fly), this protein is DNA-directed RNA polymerases I, II, and III subunit RPABC2.